An 874-amino-acid chain; its full sequence is Alanine--tRNA ligase (874 aa).

Zn(2+)-binding residues include histidine 562, histidine 566, cysteine 664, and histidine 668.

Belongs to the class-II aminoacyl-tRNA synthetase family. It depends on Zn(2+) as a cofactor.

It localises to the cytoplasm. The enzyme catalyses tRNA(Ala) + L-alanine + ATP = L-alanyl-tRNA(Ala) + AMP + diphosphate. In terms of biological role, catalyzes the attachment of alanine to tRNA(Ala) in a two-step reaction: alanine is first activated by ATP to form Ala-AMP and then transferred to the acceptor end of tRNA(Ala). Also edits incorrectly charged Ser-tRNA(Ala) and Gly-tRNA(Ala) via its editing domain. This Neisseria meningitidis serogroup B (strain ATCC BAA-335 / MC58) protein is Alanine--tRNA ligase.